The primary structure comprises 573 residues: 2-succinyl-5-enolpyruvyl-6-hydroxy-3-cyclohexene-1-carboxylate synthase (573 aa).

Belongs to the TPP enzyme family. MenD subfamily. Homodimer. It depends on Mg(2+) as a cofactor. Mn(2+) serves as cofactor. Requires thiamine diphosphate as cofactor.

It carries out the reaction isochorismate + 2-oxoglutarate + H(+) = 5-enolpyruvoyl-6-hydroxy-2-succinyl-cyclohex-3-ene-1-carboxylate + CO2. Its pathway is quinol/quinone metabolism; 1,4-dihydroxy-2-naphthoate biosynthesis; 1,4-dihydroxy-2-naphthoate from chorismate: step 2/7. The protein operates within quinol/quinone metabolism; menaquinone biosynthesis. Its function is as follows. Catalyzes the thiamine diphosphate-dependent decarboxylation of 2-oxoglutarate and the subsequent addition of the resulting succinic semialdehyde-thiamine pyrophosphate anion to isochorismate to yield 2-succinyl-5-enolpyruvyl-6-hydroxy-3-cyclohexene-1-carboxylate (SEPHCHC). The sequence is that of 2-succinyl-5-enolpyruvyl-6-hydroxy-3-cyclohexene-1-carboxylate synthase from Shewanella putrefaciens (strain CN-32 / ATCC BAA-453).